The sequence spans 93 residues: Small ribosomal subunit protein uS19m (93 aa).

Belongs to the universal ribosomal protein uS19 family.

Its subcellular location is the mitochondrion. The protein is Small ribosomal subunit protein uS19m (RPS19) of Marchantia polymorpha (Common liverwort).